Reading from the N-terminus, the 344-residue chain is MGKPGFSPRGGGGGGGGGGGGFRGRGGGGGGGGGGFGGGRGRGGGGDRGGRGGFGGGRGGGGRGGGGGGGRGAFGGRGGGGGRGGGGRGGGGRGGGGRGGGAGGFKGGKTVTIEPHRHEGVFIARGKEDALVTRNFVPGSEVYGEKRISVETNGEKIEYRVWNPFRSKLAAAVLGGVEQIHMPPGSKVLYLGAASGTTVSHVSDVVGPEGLVYAVEFSHRSGRDLINVAKKRTNIIPIIEDARHPHKYRMLVGMVDTIFADVAQPDQGRIVALNAQHFLKNGGHFVISIKASCIDSTAQPEAVFAAEVKKMQADKLKPQEQLTLEPYERDHAVVVGVYRPPPKQ.

The tract at residues 1 to 113 (MGKPGFSPRG…GFKGGKTVTI (113 aa)) is disordered. A compositionally biased stretch (gly residues) spans 8–107 (PRGGGGGGGG…RGGGAGGFKG (100 aa)). Asymmetric dimethylarginine occurs at positions 9, 23, 25, 40, 42, 48, 51, 58, 63, 71, 77, 83, 88, 93, and 98. S-adenosyl-L-methionine contacts are provided by residues 197-198 (TT), 216-217 (EF), 241-242 (DA), and 261-264 (DVAQ).

The protein belongs to the methyltransferase superfamily. Fibrillarin family. In terms of assembly, component of box C/D small nucleolar ribonucleoprotein (snoRNP) particles. It is associated with the U3, U8 and U13 small nuclear RNAs. By homology to other fibrillarins, some or all of the N-terminal domain arginines are modified to asymmetric dimethylarginine (DMA).

It localises to the nucleus. It is found in the nucleolus. It carries out the reaction L-glutaminyl-[histone H2A] + S-adenosyl-L-methionine = N(5)-methyl-L-glutaminyl-[histone H2A] + S-adenosyl-L-homocysteine + H(+). In terms of biological role, S-adenosyl-L-methionine-dependent methyltransferase that has the ability to methylate both RNAs and proteins. Involved in pre-rRNA processing. Utilizes the methyl donor S-adenosyl-L-methionine to catalyze the site-specific 2'-hydroxyl methylation of ribose moieties in pre-ribosomal RNA. Site specificity is provided by a guide RNA that base pairs with the substrate. Methylation occurs at a characteristic distance from the sequence involved in base pairing with the guide RNA. Also acts as a protein methyltransferase by mediating methylation of 'Gln-105' of histone H2A (H2AQ105me), a modification that impairs binding of the FACT complex and is specifically present at 35S ribosomal DNA locus. This is rRNA 2'-O-methyltransferase fibrillarin from Drosophila melanogaster (Fruit fly).